Consider the following 675-residue polypeptide: Methionine--tRNA ligase (675 aa).

The short motif at 15–25 is the 'HIGH' region element; it reads PYANGSIHLGH. Positions 146, 149, 159, and 162 each coordinate Zn(2+). The 'KMSKS' region signature appears at 332 to 336; that stretch reads KMSKS. Position 335 (K335) interacts with ATP. The tRNA-binding domain occupies 573-675; sequence DFAKVDMRIA…SGAQPGMQVK (103 aa).

It belongs to the class-I aminoacyl-tRNA synthetase family. MetG type 1 subfamily. Homodimer. The cofactor is Zn(2+).

It localises to the cytoplasm. It carries out the reaction tRNA(Met) + L-methionine + ATP = L-methionyl-tRNA(Met) + AMP + diphosphate. Its function is as follows. Is required not only for elongation of protein synthesis but also for the initiation of all mRNA translation through initiator tRNA(fMet) aminoacylation. The chain is Methionine--tRNA ligase from Yersinia pseudotuberculosis serotype O:1b (strain IP 31758).